The following is a 607-amino-acid chain: Elongation factor 4 (607 aa).

One can recognise a tr-type G domain in the interval 6–188; sequence DRIRNFSIIA…AIVARIPAPK (183 aa). Residues 18–23 and 135–138 contribute to the GTP site; these read DHGKST and NKID.

This sequence belongs to the TRAFAC class translation factor GTPase superfamily. Classic translation factor GTPase family. LepA subfamily.

Its subcellular location is the cell inner membrane. It carries out the reaction GTP + H2O = GDP + phosphate + H(+). Required for accurate and efficient protein synthesis under certain stress conditions. May act as a fidelity factor of the translation reaction, by catalyzing a one-codon backward translocation of tRNAs on improperly translocated ribosomes. Back-translocation proceeds from a post-translocation (POST) complex to a pre-translocation (PRE) complex, thus giving elongation factor G a second chance to translocate the tRNAs correctly. Binds to ribosomes in a GTP-dependent manner. This is Elongation factor 4 from Rhizorhabdus wittichii (strain DSM 6014 / CCUG 31198 / JCM 15750 / NBRC 105917 / EY 4224 / RW1) (Sphingomonas wittichii).